The primary structure comprises 461 residues: MTKLWGGRFTKPADKTAEGFTSSLAFDRRLYKQDIRGSIAHVRMLGRQGIIPAADAARIEQGLREIEAEIEAGQFPFRQEYEDIHLNIEKRLIEKIGPAGGRLHTARSRNDQVVTDVHLWVKDEIAAVQRLVSDLQGTLLDRAREQMGAVMPGYTHLQRAQPVLLSHHLMAYFWMLERDYGRFADALRRADVSPLGAGALAGTTFPIDREFTAAELGFAGVYPNSMDAVSDRDFIVEFVAAAAICQMHLSRLAEELVMWSSTEFGFVEMDDAYATGSSIMPQKKNPDVAELVRGKTGRIYGDLMALLTVLKGLPLAYHTDLQEDKERLFDAVDTLKACLTVMTGMLATLKFNRERMAQAVRRDFSNATDMADYLVKKGMPFREAHEVVGKAVLYCVERGKFLADLTLEEFKAFSALFEADIYQAIAPETCVSQRTSLGGTAPAEVERQLALAAEILSRRMG.

The protein belongs to the lyase 1 family. Argininosuccinate lyase subfamily.

The protein localises to the cytoplasm. The enzyme catalyses 2-(N(omega)-L-arginino)succinate = fumarate + L-arginine. It functions in the pathway amino-acid biosynthesis; L-arginine biosynthesis; L-arginine from L-ornithine and carbamoyl phosphate: step 3/3. This Symbiobacterium thermophilum (strain DSM 24528 / JCM 14929 / IAM 14863 / T) protein is Argininosuccinate lyase.